We begin with the raw amino-acid sequence, 856 residues long: Centrosomal protein of 97 kDa (856 aa).

8 LRR repeats span residues 37 to 58, 59 to 80, 81 to 102, 103 to 124, 125 to 146, 147 to 168, 171 to 192, and 196 to 205; these read DVHT…EKCK, QLIQ…AKLT, QLRV…KDLV, HLEW…NSCT, ALQH…SKLI, SLKT…PAYL, NLSI…SFLA, and ELEQLSIMNN. The LRRCT domain occupies 211-249; the sequence is TPSIPGFDYRPFIVSWCLNLRVLDGYVISQKESLKAEWL. Positions 300–742 are CCP110-binding; sequence HQRQLMSQSQ…KCVKDRDSEA (443 aa). 2 positions are modified to phosphoserine: Ser308 and Ser410. Residues 430-451 are disordered; sequence DDGADEFTKGLENQDEDKDKEK. At Ser497 the chain carries Phosphoserine. Residues 498–513 show a composition bias toward polar residues; it reads LTSLPESAGHSASRTE. The segment at 498–525 is disordered; the sequence is LTSLPESAGHSASRTEANSEEAMSPATS. The residue at position 521 (Ser521) is a Phosphoserine. The residue at position 534 (Thr534) is a Phosphothreonine. An IQ domain is found at 550 to 579; it reads LNAAATKLQACWRGFYTRNYNQQAKGVRYE. The interval 579–853 is interaction with MPHOSPH9; sequence EIRLRRMQEH…FQGLHVGVTV (275 aa). 2 disordered regions span residues 646-672 and 737-840; these read PPIS…DQSS and DRDS…PPEC. Residues 737–752 show a composition bias toward basic and acidic residues; the sequence is DRDSEATAEEHSDCSR. Polar residues predominate over residues 753 to 773; it reads ESSASEQDNTLLQQYLTSVQQ. Ser755 bears the Phosphoserine mark. The span at 776–787 shows a compositional bias: acidic residues; that stretch reads DAAEAADSDDVA. Residues 799-811 are compositionally biased toward basic and acidic residues; that stretch reads ERFDASSDSETHR. Residues 812–833 are compositionally biased toward polar residues; sequence VASTSQDEISQTPENCQLNEEA.

Interacts with CALM1, CEP76, KIF24 and TALPID3. Interacts with CCP110. ENKD1 competes with CEP97 for binding to CCP110, destabilizing the interaction between CP110 and CEP97 which promotes the removal of CCP110 and CEP97 from the mother centriole and allows the initiation of ciliogenesis. Via its interaction with CCP110, may indirectly interact with HERC2 and NEURL4. Interacts with MPHOSPH9.

The protein resides in the cytoplasm. Its subcellular location is the cytoskeleton. It is found in the microtubule organizing center. The protein localises to the centrosome. It localises to the centriole. Its function is as follows. Acts as a key negative regulator of ciliogenesis in collaboration with CCP110 by capping the mother centriole thereby preventing cilia formation. Required for recruitment of CCP110 to the centrosome. This is Centrosomal protein of 97 kDa (Cep97) from Mus musculus (Mouse).